A 132-amino-acid polypeptide reads, in one-letter code: Small ribosomal subunit protein uS11 (132 aa).

Belongs to the universal ribosomal protein uS11 family. As to quaternary structure, part of the 30S ribosomal subunit. Interacts with proteins S7 and S18. Binds to IF-3.

Functionally, located on the platform of the 30S subunit, it bridges several disparate RNA helices of the 16S rRNA. Forms part of the Shine-Dalgarno cleft in the 70S ribosome. The polypeptide is Small ribosomal subunit protein uS11 (Chlamydia felis (strain Fe/C-56) (Chlamydophila felis)).